The primary structure comprises 232 residues: Transcriptional regulatory protein CpxR (232 aa).

Residues 3–115 enclose the Response regulatory domain; the sequence is KILLVDDDRE…ELVARIRAIL (113 aa). Asp51 carries the post-translational modification 4-aspartylphosphate. A DNA-binding region (ompR/PhoB-type) is located at residues 131–230; it reads SPTLEVDALV…LRGRGYLMVS (100 aa).

In terms of processing, phosphorylated by CpxA.

The protein resides in the cytoplasm. Its function is as follows. Member of the two-component regulatory system CpxA/CpxR. This system combats a variety of extracytoplasmic protein-mediated toxicities. It performs this function by increasing the synthesis of the periplasmic protease, DegP as well as that of CpxP protein. The protein is Transcriptional regulatory protein CpxR (cpxR) of Escherichia coli O157:H7.